A 142-amino-acid chain; its full sequence is MKTQVAKKEEVTRDWYLVDVDNKVLGRVATEIANVLRGKNKPTFTPSVDTGDFVIVVNAEKIALTGRKLADKTYYSHSSYPGGLKEITAGKLLDKKPEELLKKAVKGMLPKNKLARHMLKKLKIYSGGAHPHAAQNPKNLNI.

This sequence belongs to the universal ribosomal protein uL13 family. As to quaternary structure, part of the 50S ribosomal subunit.

This protein is one of the early assembly proteins of the 50S ribosomal subunit, although it is not seen to bind rRNA by itself. It is important during the early stages of 50S assembly. The sequence is that of Large ribosomal subunit protein uL13 from Citrifermentans bemidjiense (strain ATCC BAA-1014 / DSM 16622 / JCM 12645 / Bem) (Geobacter bemidjiensis).